Consider the following 29-residue polypeptide: Glucagon (29 aa).

This sequence belongs to the glucagon family.

The protein localises to the secreted. Glucagon plays a key role in glucose metabolism and homeostasis. Regulates blood glucose by increasing gluconeogenesis and decreasing glycolysis. The polypeptide is Glucagon (GCG) (Struthio camelus (Common ostrich)).